Reading from the N-terminus, the 156-residue chain is UPF0266 membrane protein NT01EI_1718 (156 aa).

3 helical membrane passes run 6-26, 46-63, and 67-87; these read IALLVFIVLFLLYAIYDEAIM, DSLIFIGLLAILVYRNIS, and APFTTWLLATLMVVAIYIFYL.

The protein belongs to the UPF0266 family.

The protein localises to the cell inner membrane. The chain is UPF0266 membrane protein NT01EI_1718 from Edwardsiella ictaluri (strain 93-146).